Reading from the N-terminus, the 217-residue chain is N-(5'-phosphoribosyl)anthranilate isomerase (217 aa).

The protein belongs to the TrpF family.

It carries out the reaction N-(5-phospho-beta-D-ribosyl)anthranilate = 1-(2-carboxyphenylamino)-1-deoxy-D-ribulose 5-phosphate. It participates in amino-acid biosynthesis; L-tryptophan biosynthesis; L-tryptophan from chorismate: step 3/5. In Chlorobium chlorochromatii (strain CaD3), this protein is N-(5'-phosphoribosyl)anthranilate isomerase.